A 377-amino-acid chain; its full sequence is Palmitoyltransferase ZDHHC16 (377 aa).

The Cytoplasmic segment spans residues 1-79 (MRGQWSLLLG…WLVDNVIRWC (79 aa)). The helical transmembrane segment at 80–100 (GVVFVVLVIVLTSSIVAIAYL) threads the bilayer. Over 101–116 (CVLPLILQTYSVPRLC) the chain is Lumenal. Residues 117 to 137 (WHFFYSHWNLILIVFHYYQAI) form a helical membrane-spanning segment. At 138-198 (TTPPGYPPQG…NNCVGHYNHR (61 aa)) the chain is on the cytoplasmic side. Positions 155-205 (SICKKCINPKPARTHHCSICNRCVLKMDHHCPWLNNCVGHYNHRYFFSFCF) constitute a DHHC domain. Cysteine 185 functions as the S-palmitoyl cysteine intermediate in the catalytic mechanism. The chain crosses the membrane as a helical span at residues 199–219 (YFFSFCFFMTLGCVYCSYGSW). The Lumenal portion of the chain corresponds to 220–266 (DLFREAYAAIEKMKQLDKNKLQAVANQTYHQTPPPTFSFRERVTHKS). Residues 267–287 (LVYLWFLCSSVALALGALTIW) form a helical membrane-spanning segment. The Cytoplasmic portion of the chain corresponds to 288–377 (HAVLISRGET…TAHSASVMAV (90 aa)).

This sequence belongs to the DHHC palmitoyltransferase family. As to quaternary structure, interacts with ABL1. Interacts with COPS5/JAB1.

It localises to the endoplasmic reticulum membrane. It carries out the reaction L-cysteinyl-[protein] + hexadecanoyl-CoA = S-hexadecanoyl-L-cysteinyl-[protein] + CoA. In terms of biological role, palmitoyl acyltransferase that mediates palmitoylation of proteins such as PLN and ZDHHC6. Required during embryonic heart development and cardiac function, possibly by mediating palmitoylation of PLN, thereby affecting PLN phosphorylation and homooligomerization. Also required for eye development. Palmitoylates ZDHHC6, affecting the quaternary assembly of ZDHHC6, its localization, stability and function. May play a role in DNA damage response. May be involved in apoptosis regulation. Involved in the proliferation of neural stem cells by regulating the FGF/ERK pathway. The sequence is that of Palmitoyltransferase ZDHHC16 from Bos taurus (Bovine).